The primary structure comprises 329 residues: Porphobilinogen deaminase (329 aa).

Cysteine 250 carries the post-translational modification S-(dipyrrolylmethanemethyl)cysteine.

This sequence belongs to the HMBS family. As to quaternary structure, monomer. Dipyrromethane serves as cofactor.

It carries out the reaction 4 porphobilinogen + H2O = hydroxymethylbilane + 4 NH4(+). It functions in the pathway porphyrin-containing compound metabolism; protoporphyrin-IX biosynthesis; coproporphyrinogen-III from 5-aminolevulinate: step 2/4. Tetrapolymerization of the monopyrrole PBG into the hydroxymethylbilane pre-uroporphyrinogen in several discrete steps. In Burkholderia mallei (strain NCTC 10247), this protein is Porphobilinogen deaminase.